The primary structure comprises 428 residues: D-amino acid dehydrogenase (428 aa).

An FAD-binding site is contributed by 3–17; the sequence is VVILGSGVVGVASAY.

This sequence belongs to the DadA oxidoreductase family. Requires FAD as cofactor.

The enzyme catalyses a D-alpha-amino acid + A + H2O = a 2-oxocarboxylate + AH2 + NH4(+). It participates in amino-acid degradation; D-alanine degradation; NH(3) and pyruvate from D-alanine: step 1/1. In terms of biological role, oxidative deamination of D-amino acids. The chain is D-amino acid dehydrogenase from Burkholderia pseudomallei (strain 1106a).